The primary structure comprises 945 residues: MSTPSIPQFTSSFSPFSSGSHSTGMAPSQTVGLDTLAEGSQYVLEQLQLSRDAAGTGAGDGATSTSLRNSMSHTKDQPPFDNEKNQSTGSGFRDALQRDPLVEARSAVRKTSSSAPVRRRISRACDQCNQLRTKCDGQHPCAHCIEFGLTCEYARERKKRGKASKKDLAAAAAAATQGSNGHSGQANASLMGERTSEDSRPGQDVNGTYDSAFESHHLSSQPSHMQHASTAGISGLHESQTAPSHSQSSLGTTIDAMHLNHFNTMNDSGRPAMSISDLRSLPPSVLPPQGLSSGYNASAFALVNPQEPGSPANQFRLGSSAENPTAPFLGLSPPGQSPGWLPLPSPSPANFPSFSLHPFSSTLRYPVLQPVLPHIASIIPQSLACDLLDVYFTSSSSSHLSPLSPYVVGYIFRKQSFLHPTKPRICSPGLLASMLWVAAQTSEAAFLTSPPSARGRVCQKLLELTIGLLRPLVHGPATGEASPNYAANMVINGVALGGFGVSMDQLGAQSSATGAVDDVATYVHLATVVSASEYKAASMRWWTAAWSLARELKLGRELPPNVSHARQDGERDGDGEADKRHPPTLITSLGHGSGSSGINVTEEEREERRRLWWLLYATDRHLALCYNRPLTLLDKECGGLLQPMNDDLWQVGDFAAAAYRQVGPPVECTGHSMYGYFLPLMTILGGIVDLHHAENHPRFGLAFRNSPEWERQVLDVTRQLDTYGRSLKEFEARYTSNLTLGATDNEPVVEGAHLDHTSPSGRSSSTVGSRVSESIVHTRMVVAYGTHIMHVLHILLAGKWDPVNLLEDHDLWISSESFVSAMSHAVGAAEAAAEILEYDPDLSFMPFFFGIYLLQGSFLLLLAADKLQGDASPSVVRACETIVRAHEACVVTLNTEYQRTFRKVMRSALAQVRGRIPEDFGEQQQRRREVLALYRWSGDGSGLAL.

Low complexity predominate over residues 1–23 (MSTPSIPQFTSSFSPFSSGSHST). 2 disordered regions span residues 1–32 (MSTP…QTVG) and 53–118 (AAGT…APVR). Positions 73–84 (HTKDQPPFDNEK) are enriched in basic and acidic residues. The segment at residues 125 to 151 (CDQCNQLRTKCDGQHPCAHCIEFGLTC) is a DNA-binding region (zn(2)-C6 fungal-type). Disordered stretches follow at residues 172–210 (AAAA…GTYD) and 559–601 (PPNV…INVT). A compositionally biased stretch (polar residues) spans 176-188 (TQGSNGHSGQANA). Residues 565-581 (ARQDGERDGDGEADKRH) show a composition bias toward basic and acidic residues.

This sequence belongs to the xlnR/xlr1 family.

It is found in the nucleus. In terms of biological role, transcriptional activator of the xylanolytic system. Involved in the regulation of extracellular cellulolytic and xylanolytic genes and in the regulation of the intracellular activities of D-xylose catabolic genes in the pentose catabolic pathway (PCP) in response to the presence of D-xylose. Binds to the DNA sequence 5'-GGNTAAA-3'. In Aspergillus niger, this protein is Xylanolytic transcriptional activator xlnR (xlnR).